A 391-amino-acid chain; its full sequence is Anhydro-N-acetylmuramic acid kinase (391 aa).

ATP is bound at residue 9-16; it reads GTSVDGID.

Belongs to the anhydro-N-acetylmuramic acid kinase family.

The enzyme catalyses 1,6-anhydro-N-acetyl-beta-muramate + ATP + H2O = N-acetyl-D-muramate 6-phosphate + ADP + H(+). The protein operates within amino-sugar metabolism; 1,6-anhydro-N-acetylmuramate degradation. Its pathway is cell wall biogenesis; peptidoglycan recycling. In terms of biological role, catalyzes the specific phosphorylation of 1,6-anhydro-N-acetylmuramic acid (anhMurNAc) with the simultaneous cleavage of the 1,6-anhydro ring, generating MurNAc-6-P. Is required for the utilization of anhMurNAc either imported from the medium or derived from its own cell wall murein, and thus plays a role in cell wall recycling. In Gloeothece citriformis (strain PCC 7424) (Cyanothece sp. (strain PCC 7424)), this protein is Anhydro-N-acetylmuramic acid kinase.